Consider the following 322-residue polypeptide: Peroxisomal adenine nucleotide carrier 1 (322 aa).

3 Solcar repeats span residues leucine 5–valine 94, isoleucine 104–histidine 184, and leucine 202–threonine 298. The next 6 membrane-spanning stretches (helical) occupy residues valine 8 to leucine 28, isoleucine 104 to isoleucine 124, phenylalanine 158 to phenylalanine 178, valine 201 to leucine 221, isoleucine 254 to leucine 274, and alanine 286 to isoleucine 306.

The protein belongs to the mitochondrial carrier (TC 2.A.29) family. As to expression, expressed in stamens, pollen grains, seeds, leaves, cotyledons, roots, stems, flowers, hypocotyls and siliques.

It localises to the peroxisome membrane. Functionally, peroxisomal adenine nucleotide transporter catalyzing the counterexchange of ATP with AMP. ATP is needed by reactions that generate acyl-CoA for peroxisomal fatty acid beta-oxidation during postgerminative growth. Required for the beta-oxidation reactions involved in auxin biosynthesis and for the conversion of seed-reserved triacylglycerols into sucrose that is necessary for growth before the onset of photosynthesis. The chain is Peroxisomal adenine nucleotide carrier 1 (PNC1) from Arabidopsis thaliana (Mouse-ear cress).